Reading from the N-terminus, the 525-residue chain is GMP synthase [glutamine-hydrolyzing] (525 aa).

The region spanning 9–207 (RILILDFGSQ…VRDICQCEAL (199 aa)) is the Glutamine amidotransferase type-1 domain. Cys86 acts as the Nucleophile in catalysis. Active-site residues include His181 and Glu183. Positions 208 to 400 (WTPAKIIDDA…LGLPYDMLYR (193 aa)) constitute a GMPS ATP-PPase domain. 235 to 241 (SGGVDSS) serves as a coordination point for ATP.

Homodimer.

The enzyme catalyses XMP + L-glutamine + ATP + H2O = GMP + L-glutamate + AMP + diphosphate + 2 H(+). Its pathway is purine metabolism; GMP biosynthesis; GMP from XMP (L-Gln route): step 1/1. Its function is as follows. Catalyzes the synthesis of GMP from XMP. This is GMP synthase [glutamine-hydrolyzing] from Salmonella typhimurium (strain LT2 / SGSC1412 / ATCC 700720).